We begin with the raw amino-acid sequence, 304 residues long: Glutaminase (304 aa).

Substrate-binding residues include S61, N113, E158, N165, Y189, Y240, and V258.

It belongs to the glutaminase family. As to quaternary structure, homotetramer.

It catalyses the reaction L-glutamine + H2O = L-glutamate + NH4(+). This chain is Glutaminase, found in Fusobacterium nucleatum subsp. nucleatum (strain ATCC 25586 / DSM 15643 / BCRC 10681 / CIP 101130 / JCM 8532 / KCTC 2640 / LMG 13131 / VPI 4355).